Reading from the N-terminus, the 365-residue chain is Uroporphyrinogen decarboxylase (365 aa).

Substrate contacts are provided by residues R27–R31, D77, Y154, S209, and H327.

The protein belongs to the uroporphyrinogen decarboxylase family. As to quaternary structure, homodimer.

The protein localises to the cytoplasm. The enzyme catalyses uroporphyrinogen III + 4 H(+) = coproporphyrinogen III + 4 CO2. It participates in porphyrin-containing compound metabolism; protoporphyrin-IX biosynthesis; coproporphyrinogen-III from 5-aminolevulinate: step 4/4. Its function is as follows. Catalyzes the decarboxylation of four acetate groups of uroporphyrinogen-III to yield coproporphyrinogen-III. This Alkalilimnicola ehrlichii (strain ATCC BAA-1101 / DSM 17681 / MLHE-1) protein is Uroporphyrinogen decarboxylase.